The following is a 494-amino-acid chain: Trigger factor (494 aa).

The region spanning 169–254 (GDRITMDYVG…VKEVAAPADV (86 aa)) is the PPIase FKBP-type domain. Positions 441–494 (LAEEEGEAKAETKKAAPKKKAAAKAEAADAGEGEEAAPKKKAAPKKKAADESAE) are disordered.

It belongs to the FKBP-type PPIase family. Tig subfamily.

It is found in the cytoplasm. It carries out the reaction [protein]-peptidylproline (omega=180) = [protein]-peptidylproline (omega=0). Involved in protein export. Acts as a chaperone by maintaining the newly synthesized protein in an open conformation. Functions as a peptidyl-prolyl cis-trans isomerase. The sequence is that of Trigger factor from Rhizobium johnstonii (strain DSM 114642 / LMG 32736 / 3841) (Rhizobium leguminosarum bv. viciae).